A 483-amino-acid polypeptide reads, in one-letter code: Serine/threonine-protein phosphatase 2A regulatory subunit phr2AB (483 aa).

2 WD repeats span residues 22 to 61 (SDANVVPAIEFDQTGDFIAVGDKGGKVLLLKRTHDKQSSK) and 88 to 129 (EIEE…IKQV). Positions 132–152 (SATTTGPSYNGSLASNNTRSP) are disordered. 4 WD repeats span residues 206–244 (AHAYHINSISLNSDGETYISSDDLRIHLWNLNINTECFN), 255–295 (DLTE…LCDN), 314–352 (EIISSISDIKFSRDGRYILSRDFLTLKLWDINMENKPVK), and 369–410 (ENDC…DVCL). The tract at residues 421–443 (TKTLTTKMKLRSSKKEPKKPEDI) is disordered. Residues 433-443 (SKKEPKKPEDI) show a composition bias toward basic and acidic residues. A WD 7 repeat occupies 449-483 (EYTKKTLHCAWHPKDNLIAVGAANTVYLYAATENK).

The protein belongs to the phosphatase 2A regulatory subunit B family. PP2A consists of a trimeric holoenzyme, composed of a 37 kDa catalytic subunit (C subunit) and a 65 kDa constant regulatory subunit (A subunit), that associates with a variety of regulatory subunits (B subunit) such as phr2AB (B55) and psrA (B56 homolog). The trimer may partially dissociates into a core 'AC' dimer equally active compared to the trimer.

It localises to the cytoplasm. It is found in the cytosol. Its subcellular location is the cytoskeleton. The protein resides in the microtubule organizing center. The protein localises to the centrosome. In terms of biological role, the B regulatory subunit might modulate substrate selectivity and catalytic activity, and might also direct the localization of the catalytic enzyme to a particular subcellular compartment. The sequence is that of Serine/threonine-protein phosphatase 2A regulatory subunit phr2AB (phr2aB) from Dictyostelium discoideum (Social amoeba).